The sequence spans 263 residues: Small ribosomal subunit protein eS4 (263 aa).

Residues 42-104 (LPLIVFLRNR…TGEHFRLVYD (63 aa)) enclose the S4 RNA-binding domain.

The protein belongs to the eukaryotic ribosomal protein eS4 family.

This chain is Small ribosomal subunit protein eS4 (RPS4Y1), found in Pongo pygmaeus (Bornean orangutan).